The chain runs to 699 residues: TPR repeat-containing thioredoxin TTL1 (699 aa).

The segment at 1–211 (MPKSVKPISE…SSSRSSSTVA (211 aa)) is disordered. Residues 9–20 (SESDKLSDHLRD) show a composition bias toward basic and acidic residues. 2 positions are modified to phosphoserine: serine 39 and serine 42. Composition is skewed to low complexity over residues 52–70 (TTTTTTTTTSSSSSSSSGS) and 83–135 (RSNS…TSPA). The span at 166-182 (SGTGTYGHGSIMRGGGI) shows a compositional bias: gly residues. Over residues 195–210 (NSPVNVGSSSRSSSTV) the composition is skewed to low complexity. TPR repeat units lie at residues 227 to 260 (SEEVKRVGNEMYRKGLFNEALKLYDRAIALSPTN), 262 to 294 (AYRSNRAAALIGLSRIGEAVKECEDAVRSDPNY), 296 to 328 (RAHHRLALLLIRLGQVNSARKHLCFLGRPSDPM), 419 to 452 (AYIYFVKAQIEMALGRFENAVMAAEKASQIDPRC), 465 to 498 (VARARARGNDLYKSERYTEASSAYAEGLRLDPCN), 499 to 532 (AILYCNRAACWFKLGMWERSIEDCNQALRYQPSY), and 534 to 566 (KPLLRRAASNSKMERWGAAVSDYEALIRELPHD). The Thioredoxin domain occupies 605-691 (QFKSAMNLPG…IVCPSKEVLE (87 aa)).

As to expression, expressed in the root elongation zone, stele, root cap, embryo vascular system, leaf axilar buds, silique abscission zone and guard cells.

Involved in responses to osmotic stress and abscisic acid (ABA). May act as a positive regulator of ABA signaling during germination and seedling development under stress. The sequence is that of TPR repeat-containing thioredoxin TTL1 (TTL1) from Arabidopsis thaliana (Mouse-ear cress).